Here is a 239-residue protein sequence, read N- to C-terminus: Phosducin-like protein 3 (239 aa).

Residues 16–37 are disordered; that stretch reads KKGILPPKETPVEEEEDEQLHL. The Phosducin domain occupies 28–201; it reads EEEEDEQLHL…LEWRLSESGA (174 aa). The residue at position 41 (Ser41) is a Phosphoserine. Residues 89–239 form a thioredoxin fold region; it reads FGELKEISGQ…RDGEEDSDED (151 aa). Polar residues predominate over residues 217–227; the sequence is QLMTSIRCSAN. A disordered region spans residues 217 to 239; the sequence is QLMTSIRCSANTHRDGEEDSDED.

The protein belongs to the phosducin family. As to quaternary structure, interacts (via thioredoxin fold region) with kdr/vegfr2 (via juxtamembrane domain). In terms of tissue distribution, expressed in endothelial cells.

The protein localises to the cytoplasm. Its subcellular location is the perinuclear region. It localises to the endoplasmic reticulum. In terms of biological role, acts as a chaperone for the angiogenic VEGF receptor KDR/VEGFR2, increasing its abundance by inhibiting its ubiquitination and degradation. Inhibits the folding activity of the chaperonin-containing T-complex (CCT) which leads to inhibition of cytoskeletal actin folding. Acts as a chaperone during heat shock alongside HSP90 and HSP40/70 chaperone complexes. Modulates the activation of caspases during apoptosis. In Danio rerio (Zebrafish), this protein is Phosducin-like protein 3.